We begin with the raw amino-acid sequence, 477 residues long: Cytochrome P450 708A2 (477 aa).

A helical membrane pass occupies residues 3–23 (FVWSAAVWVIAVAAVVISKWL). Cys-426 is a binding site for heme.

This sequence belongs to the cytochrome P450 family. Heme is required as a cofactor. In terms of tissue distribution, expressed primarily in the root epidermis.

Its subcellular location is the membrane. Its function is as follows. Hydroxylates thalianol into thalian-diol. This Arabidopsis thaliana (Mouse-ear cress) protein is Cytochrome P450 708A2 (CYP708A2).